The primary structure comprises 769 residues: Serine/threonine-protein kinase PLK4 (769 aa).

Residues 14 to 267 (YEVQHLLGKG…LEAVLCHPFM (254 aa)) form the Protein kinase domain. Residues 20–28 (LGKGGFATV) and Lys-43 contribute to the ATP site. The active-site Proton acceptor is Asp-138. The Cryptic POLO box 1 (CPB1) domain occupies 381-498 (EDRISVPPLN…ARFVGLVKSK (118 aa)). A Cryptic POLO box 2 (CPB2) domain is found at 499–602 (TPKVTYFSTL…GRRPITDVQP (104 aa)). The POLO box domain occupies 660–739 (PIKRINVPDI…IPNIQLKLKT (80 aa)).

It belongs to the protein kinase superfamily. Ser/Thr protein kinase family. CDC5/Polo subfamily. Homodimer. Post-translationally, ubiquitinated by the SCF(Slimb) ubiquitin ligase complex; leading to its degradation by the proteasome during interphase and regulating centriole number and ensuring the block to centriole reduplication.

The protein localises to the cytoplasm. It localises to the cytoskeleton. It is found in the microtubule organizing center. The protein resides in the centrosome. Its subcellular location is the centriole. It carries out the reaction L-seryl-[protein] + ATP = O-phospho-L-seryl-[protein] + ADP + H(+). The enzyme catalyses L-threonyl-[protein] + ATP = O-phospho-L-threonyl-[protein] + ADP + H(+). Its function is as follows. Serine/threonine-protein kinase that plays a central role in centriole duplication. Able to trigger procentriole formation on the surface of the mother centriole cylinder, using mother centriole as a platform, leading to the recruitment of centriole biogenesis proteins such as sas-6. When overexpressed, it is able to induce centrosome amplification through the simultaneous generation of multiple procentrioles adjoining each parental centriole during S phase. Centrosome amplification following overexpression can initiate tumorigenesis, highlighting the importance of centrosome regulation in cancers. The chain is Serine/threonine-protein kinase PLK4 (SAK) from Drosophila sechellia (Fruit fly).